A 415-amino-acid polypeptide reads, in one-letter code: Phosphoglycerate kinase (415 aa).

Substrate-binding positions include 27 to 29 (DIN), R44, 67 to 70 (HQGR), R124, and R164. Residues E336 and 362–365 (GGHM) each bind ATP.

This sequence belongs to the phosphoglycerate kinase family. In terms of assembly, monomer.

Its subcellular location is the cytoplasm. The enzyme catalyses (2R)-3-phosphoglycerate + ATP = (2R)-3-phospho-glyceroyl phosphate + ADP. The protein operates within carbohydrate degradation; glycolysis; pyruvate from D-glyceraldehyde 3-phosphate: step 2/5. The chain is Phosphoglycerate kinase from Sulfurisphaera tokodaii (strain DSM 16993 / JCM 10545 / NBRC 100140 / 7) (Sulfolobus tokodaii).